A 483-amino-acid polypeptide reads, in one-letter code: UDP-N-acetylmuramoyl-L-alanyl-D-glutamate--2,6-diaminopimelate ligase (483 aa).

UDP-N-acetyl-alpha-D-muramoyl-L-alanyl-D-glutamate is bound at residue Ser-29. 107-113 (GTSGKTS) serves as a coordination point for ATP. UDP-N-acetyl-alpha-D-muramoyl-L-alanyl-D-glutamate is bound by residues 149 to 150 (TT), Ser-176, Gln-182, and Arg-184. Lys-216 carries the post-translational modification N6-carboxylysine. Residues Arg-380, 404–407 (DNPR), Gly-452, and Glu-456 each bind meso-2,6-diaminopimelate. Residues 404–407 (DNPR) carry the Meso-diaminopimelate recognition motif motif.

The protein belongs to the MurCDEF family. MurE subfamily. It depends on Mg(2+) as a cofactor. Post-translationally, carboxylation is probably crucial for Mg(2+) binding and, consequently, for the gamma-phosphate positioning of ATP.

The protein resides in the cytoplasm. The enzyme catalyses UDP-N-acetyl-alpha-D-muramoyl-L-alanyl-D-glutamate + meso-2,6-diaminopimelate + ATP = UDP-N-acetyl-alpha-D-muramoyl-L-alanyl-gamma-D-glutamyl-meso-2,6-diaminopimelate + ADP + phosphate + H(+). It functions in the pathway cell wall biogenesis; peptidoglycan biosynthesis. Catalyzes the addition of meso-diaminopimelic acid to the nucleotide precursor UDP-N-acetylmuramoyl-L-alanyl-D-glutamate (UMAG) in the biosynthesis of bacterial cell-wall peptidoglycan. In Chelativorans sp. (strain BNC1), this protein is UDP-N-acetylmuramoyl-L-alanyl-D-glutamate--2,6-diaminopimelate ligase.